Consider the following 297-residue polypeptide: MEHLGAHHLHQGQAEPISFGIDQILNTSEPGSCMVSHPRLQDSADYGLGCIVGSAYNTVTGGYGASGGGAGAYGGTSCSMGALPGSYNVNMAVSMNGNALSSAGGVIRVPAHRPVAGGVHQPLSAAVPPVNGMNSLTGLTFPWMESNRRYTKDRFTGHPYQNRTPPKKKKPRTSFTRLQICELEKRFHRQKYLASAERAALAKALKMTDAQVKTWFQNRRTKWRRQTAEEREAERQQANRILMQLQQEAFQKTINQPIQADPICVHNSSLFALQNLQPWSDDSTKITSVTTVASACE.

Residues 153-174 (DRFTGHPYQNRTPPKKKKPRTS) form a disordered region. Residues 168-227 (KKKPRTSFTRLQICELEKRFHRQKYLASAERAALAKALKMTDAQVKTWFQNRRTKWRRQT) constitute a DNA-binding region (homeobox).

It localises to the nucleus. Its function is as follows. Seems to be involved in the development of cranial sensory innervation from peripheral ganglia. This is T-cell leukemia homeobox protein 1 (TLX1) from Gallus gallus (Chicken).